A 741-amino-acid polypeptide reads, in one-letter code: Polyribonucleotide nucleotidyltransferase (741 aa).

2 residues coordinate Mg(2+): D489 and D495. The KH domain maps to 556–615 (PKIDSIQIPVDKIKVVIGKGGETIDKIIAETGVTIDIDEEGLVQIFSSDQDAIDRAKTII). Positions 625-693 (GEVYTVPVVR…EKGRVDASIK (69 aa)) constitute an S1 motif domain. A disordered region spans residues 696–741 (LPKPEKNEDGENGEEHRHCCCSHHKPDHHSESMEAPKKSDESETKE). 2 stretches are compositionally biased toward basic and acidic residues: residues 698 to 713 (KPEKNEDGENGEEHRH) and 723 to 741 (HHSESMEAPKKSDESETKE).

It belongs to the polyribonucleotide nucleotidyltransferase family. The cofactor is Mg(2+).

It localises to the cytoplasm. It catalyses the reaction RNA(n+1) + phosphate = RNA(n) + a ribonucleoside 5'-diphosphate. Involved in mRNA degradation. Catalyzes the phosphorolysis of single-stranded polyribonucleotides processively in the 3'- to 5'-direction. This Streptococcus thermophilus (strain ATCC BAA-491 / LMD-9) protein is Polyribonucleotide nucleotidyltransferase.